Reading from the N-terminus, the 1241-residue chain is ATP-dependent helicase/nuclease subunit A (1241 aa).

The UvrD-like helicase ATP-binding domain maps to 12–485; sequence SQWTDDQWKA…IDLAKNFRSR (474 aa). 33 to 40 is an ATP binding site; that stretch reads AAAGSGKT. The UvrD-like helicase C-terminal domain occupies 505-805; sequence GEIDYDADAE…RIMTIHKSKG (301 aa).

Belongs to the helicase family. AddA subfamily. As to quaternary structure, heterodimer of AddA and AddB/RexB. Requires Mg(2+) as cofactor.

It catalyses the reaction Couples ATP hydrolysis with the unwinding of duplex DNA by translocating in the 3'-5' direction.. It carries out the reaction ATP + H2O = ADP + phosphate + H(+). Its function is as follows. The heterodimer acts as both an ATP-dependent DNA helicase and an ATP-dependent, dual-direction single-stranded exonuclease. Recognizes the chi site generating a DNA molecule suitable for the initiation of homologous recombination. The AddA nuclease domain is required for chi fragment generation; this subunit has the helicase and 3' -&gt; 5' nuclease activities. The polypeptide is ATP-dependent helicase/nuclease subunit A (Bacillus cereus (strain Q1)).